We begin with the raw amino-acid sequence, 298 residues long: Ribosomal RNA small subunit methyltransferase H (298 aa).

Residues 31 to 33 (GGH), D50, Y80, D95, and Q102 contribute to the S-adenosyl-L-methionine site. Residues 255-298 (AEKDLYGNTNKPFKSVGKAIDPDDEEKERNNRARSARLRIAERE) form a disordered region.

The protein belongs to the methyltransferase superfamily. RsmH family.

It is found in the cytoplasm. It catalyses the reaction cytidine(1402) in 16S rRNA + S-adenosyl-L-methionine = N(4)-methylcytidine(1402) in 16S rRNA + S-adenosyl-L-homocysteine + H(+). In terms of biological role, specifically methylates the N4 position of cytidine in position 1402 (C1402) of 16S rRNA. This is Ribosomal RNA small subunit methyltransferase H from Cytophaga hutchinsonii (strain ATCC 33406 / DSM 1761 / CIP 103989 / NBRC 15051 / NCIMB 9469 / D465).